The primary structure comprises 36 residues: Pancreatic polypeptide (36 aa).

Tyr36 bears the Tyrosine amide mark.

Belongs to the NPY family.

The protein resides in the secreted. Functionally, hormone secreted by pancreatic cells that acts as a regulator of pancreatic and gastrointestinal functions probably by signaling through the G protein-coupled receptor NPY4R2. In Didelphis virginiana (North American opossum), this protein is Pancreatic polypeptide (PPY).